Here is a 357-residue protein sequence, read N- to C-terminus: Chorismate synthase (357 aa).

Arg47 contributes to the NADP(+) binding site. FMN contacts are provided by residues 123–125, Gly281, 296–300, and Arg324; these read RAS and KPTSS.

It belongs to the chorismate synthase family. As to quaternary structure, homotetramer. Requires FMNH2 as cofactor.

The catalysed reaction is 5-O-(1-carboxyvinyl)-3-phosphoshikimate = chorismate + phosphate. The protein operates within metabolic intermediate biosynthesis; chorismate biosynthesis; chorismate from D-erythrose 4-phosphate and phosphoenolpyruvate: step 7/7. Catalyzes the anti-1,4-elimination of the C-3 phosphate and the C-6 proR hydrogen from 5-enolpyruvylshikimate-3-phosphate (EPSP) to yield chorismate, which is the branch point compound that serves as the starting substrate for the three terminal pathways of aromatic amino acid biosynthesis. This reaction introduces a second double bond into the aromatic ring system. This is Chorismate synthase from Chlamydia trachomatis serovar D (strain ATCC VR-885 / DSM 19411 / UW-3/Cx).